A 373-amino-acid polypeptide reads, in one-letter code: MSTLTLSNITKSYPNGYQAVHKLSLNIEDGEMVVLVGPSGCGKSTLLRMIAGLEEITSGKLKIDDCLVNNLEPSERDIAMVFQNYALYPHMSVYDNMAYGLRNRKTPKADIQRIVNDTAEMLEIDHLLERKPKELSGGQRQRVAMGRAIVRKPKIFLFDEPLSNLDAKLRVQMRLQIKKLQRRLATTSVYVTHDQVEAMTLADKLVVLNQGTVEQVGTPLEIYDNPASVFVATFIGSPAMNILDAKVTNKGLTLGSSLSPIDTQSLKPGDIKLGLRPEHINIVEKSPWFEVEVELIESLGADLLLYCKTLDCKEMDETDQNLVVRAEGHSKIEIGDILGLDIDQKHLHLFDADTSKHIEIDLKMNDQKELLYA.

Positions 4–235 (LTLSNITKSY…PASVFVATFI (232 aa)) constitute an ABC transporter domain. Position 37 to 44 (37 to 44 (GPSGCGKS)) interacts with ATP.

Belongs to the ABC transporter superfamily. sn-glycerol-3-phosphate importer (TC 3.A.1.1.3) family. As to quaternary structure, the complex is composed of two ATP-binding proteins (UgpC), two transmembrane proteins (UgpA and UgpE) and a solute-binding protein (UgpB).

The protein resides in the cell inner membrane. It catalyses the reaction sn-glycerol 3-phosphate(out) + ATP + H2O = sn-glycerol 3-phosphate(in) + ADP + phosphate + H(+). In terms of biological role, part of the ABC transporter complex UgpBAEC involved in sn-glycerol-3-phosphate (G3P) import. Responsible for energy coupling to the transport system. The polypeptide is sn-glycerol-3-phosphate import ATP-binding protein UgpC (Psychromonas ingrahamii (strain DSM 17664 / CCUG 51855 / 37)).